We begin with the raw amino-acid sequence, 122 residues long: Photosystem II extrinsic protein U (122 aa).

Residues 1–26 form the signal peptide; it reads MKTIVRLFAILMVLISSVGFVGSAVA.

Belongs to the PsbU family. As to quaternary structure, PSII is composed of 1 copy each of membrane proteins PsbA, PsbB, PsbC, PsbD, PsbE, PsbF, PsbH, PsbI, PsbJ, PsbK, PsbL, PsbM, PsbT, PsbX, PsbY, PsbZ, Psb30/Ycf12, peripheral proteins PsbO, CyanoQ (PsbQ), PsbU, PsbV and a large number of cofactors. It forms dimeric complexes.

The protein localises to the cellular thylakoid membrane. Its function is as follows. One of the extrinsic, lumenal subunits of photosystem II (PSII). PSII is a light-driven water plastoquinone oxidoreductase, using light energy to abstract electrons from H(2)O, generating a proton gradient subsequently used for ATP formation. The extrinsic proteins stabilize the structure of photosystem II oxygen-evolving complex (OEC), the ion environment of oxygen evolution and protect the OEC against heat-induced inactivation. The sequence is that of Photosystem II extrinsic protein U from Crocosphaera subtropica (strain ATCC 51142 / BH68) (Cyanothece sp. (strain ATCC 51142)).